A 217-amino-acid chain; its full sequence is D-methionine transport system permease protein MetI (217 aa).

At 1 to 19 the chain is on the periplasmic side; it reads MSEPMMWLLVRGVWETLAM. Positions 13–204 constitute an ABC transmembrane type-1 domain; it reads VWETLAMTFV…LLVILVYLIQ (192 aa). Residues 20–40 form a helical membrane-spanning segment; it reads TFVSGFFGFVIGLPVGVLLYV. Residues 41-57 lie on the Cytoplasmic side of the membrane; sequence TRPGQIIANAKLYRTVS. Residues 58–78 traverse the membrane as a helical segment; that stretch reads AIVNIFRSIPFIILLVWMIPF. The Periplasmic segment spans residues 79-80; sequence TR. The chain crosses the membrane as a helical span at residues 81–101; sequence VIVGTSIGLQAAIVPLTVGAA. Residues 102–151 lie on the Cytoplasmic side of the membrane; the sequence is PFIARMVENALLEIPTGLIEASRAMGATPMQIVRKVLLPEALPGLVNAAT. A helical membrane pass occupies residues 152–172; it reads ITLITLVGYSAMGGAVGAGGL. The Periplasmic segment spans residues 173–185; it reads GQIGYQYGYIGYN. The helical transmembrane segment at 186–206 threads the bilayer; that stretch reads ATVMNTVLVLLVILVYLIQFA. Residues 207–217 are Cytoplasmic-facing; it reads GDRIVRAVTRK.

Belongs to the binding-protein-dependent transport system permease family. CysTW subfamily.

It localises to the cell inner membrane. Part of the binding-protein-dependent transport system for D-methionine and the toxic methionine analog alpha-methyl-methionine. Probably responsible for the translocation of the substrate across the membrane. Its function is as follows. (Microbial infection) Probably transports the toxic C-terminal region of CdiA from E.coli strain MHI813 across the inner membrane to the cytoplasm, where CdiA has a toxic effect. Toxin transport is strain-specific, mutations in this gene do not confer resistance to several other tested CdiA toxins. This chain is D-methionine transport system permease protein MetI (metI), found in Escherichia coli (strain K12).